The sequence spans 1423 residues: Autophagy-related protein 11 (1423 aa).

Coiled-coil stretches lie at residues 551–589 (DDEL…QSQA) and 625–978 (SEGT…ASEL). 2 disordered regions span residues 583–660 (LHRQ…SNRA) and 1028–1048 (RAER…SLRK). The segment covering 585–602 (RQSQASRPGNLFQPQTNS) has biased composition (polar residues). Over residues 631–648 (LLRRISELENELREEKQR) the composition is skewed to basic and acidic residues. Polar residues-rich tracts occupy residues 650 to 660 (SRIQNDLSNRA) and 1034 to 1047 (QNPN…TSLR). Residues 1102–1130 (HRIKEVEHKARKWQKEARSYRDRAHIAQK) are a coiled coil. The segment at 1327 to 1423 (SLRAAAPETP…DYTYESPGKK (97 aa)) is disordered. Residues 1383 to 1395 (KTAEPRRMLDRQE) show a composition bias toward basic and acidic residues.

The protein belongs to the ATG11 family. In terms of assembly, homodimer and potential homooligomers. Interacts with ATG1 kinase and the ATG19 and ATG34 cargo protein transporters. Interacts with ATG9, ATG17 and ATG20.

Its subcellular location is the preautophagosomal structure membrane. It is found in the vacuole membrane. Its function is as follows. Involved in cytoplasm to vacuole transport (Cvt), pexophagy, mitophagy and nucleophagy. Recruits mitochondria for their selective degradation via autophagy (mitophagy) during starvation, through its interaction with ATG32. Works as scaffold proteins that recruit ATG proteins to the pre-autophagosome (PAS), the site of vesicle/autophagosome formation. Required for ATG9 anterograde transport from the mitochondria to the PAS. Also recruits the ATG19-prAPE1 complex to the PAS. Required for the Cvt vesicles completion. Plays a role in morphological differentiation and cephalosporin production. In Hapsidospora chrysogena (Acremonium chrysogenum), this protein is Autophagy-related protein 11.